We begin with the raw amino-acid sequence, 231 residues long: Urease accessory protein UreE (231 aa).

The interval 185–231 (VASPLDEPHGSGLHIHGIHSHEEGHSHGDHDHDHSHSHGDHDHDHKH) is disordered. A compositionally biased stretch (basic and acidic residues) spans 203 to 231 (HSHEEGHSHGDHDHDHSHSHGDHDHDHKH).

It belongs to the UreE family.

It is found in the cytoplasm. Functionally, involved in urease metallocenter assembly. Binds nickel. Probably functions as a nickel donor during metallocenter assembly. The polypeptide is Urease accessory protein UreE (Yersinia pestis bv. Antiqua (strain Antiqua)).